A 256-amino-acid polypeptide reads, in one-letter code: Zinc import ATP-binding protein ZnuC (256 aa).

One can recognise an ABC transporter domain in the interval 6–221 (IAAEGLSIRV…PEYRALFGTG (216 aa)). Residue 38 to 45 (GPNGSGKS) coordinates ATP. Positions 237-256 (HDDDCGHDHGAEHMHPHGDR) are disordered.

Belongs to the ABC transporter superfamily. Zinc importer (TC 3.A.1.15.5) family. In terms of assembly, the complex is composed of two ATP-binding proteins (ZnuC), two transmembrane proteins (ZnuB) and a solute-binding protein (ZnuA).

It localises to the cell inner membrane. It carries out the reaction Zn(2+)(out) + ATP(in) + H2O(in) = Zn(2+)(in) + ADP(in) + phosphate(in) + H(+)(in). In terms of biological role, part of the ABC transporter complex ZnuABC involved in zinc import. Responsible for energy coupling to the transport system. This is Zinc import ATP-binding protein ZnuC from Ruegeria pomeroyi (strain ATCC 700808 / DSM 15171 / DSS-3) (Silicibacter pomeroyi).